The primary structure comprises 201 residues: Glycerol-3-phosphate acyltransferase (201 aa).

5 helical membrane passes run 9 to 29 (LTLI…FGLI), 60 to 80 (LAAA…LVAS), 86 to 106 (AAIG…WIGF), 116 to 136 (LGVL…VWIV), and 153 to 173 (IVVP…LFAI).

The protein belongs to the PlsY family. In terms of assembly, probably interacts with PlsX.

The protein localises to the cell inner membrane. The catalysed reaction is an acyl phosphate + sn-glycerol 3-phosphate = a 1-acyl-sn-glycero-3-phosphate + phosphate. It functions in the pathway lipid metabolism; phospholipid metabolism. Catalyzes the transfer of an acyl group from acyl-phosphate (acyl-PO(4)) to glycerol-3-phosphate (G3P) to form lysophosphatidic acid (LPA). This enzyme utilizes acyl-phosphate as fatty acyl donor, but not acyl-CoA or acyl-ACP. The sequence is that of Glycerol-3-phosphate acyltransferase from Brucella anthropi (strain ATCC 49188 / DSM 6882 / CCUG 24695 / JCM 21032 / LMG 3331 / NBRC 15819 / NCTC 12168 / Alc 37) (Ochrobactrum anthropi).